Consider the following 238-residue polypeptide: Probable transcriptional regulatory protein YeeN (238 aa).

It belongs to the TACO1 family. YeeN subfamily.

Its subcellular location is the cytoplasm. This Shigella flexneri protein is Probable transcriptional regulatory protein YeeN.